Here is a 1379-residue protein sequence, read N- to C-terminus: DNA-directed RNA polymerase subunit beta'' (1379 aa).

Positions 220, 293, 300, and 303 each coordinate Zn(2+).

The protein belongs to the RNA polymerase beta' chain family. RpoC2 subfamily. As to quaternary structure, in plastids the minimal PEP RNA polymerase catalytic core is composed of four subunits: alpha, beta, beta', and beta''. When a (nuclear-encoded) sigma factor is associated with the core the holoenzyme is formed, which can initiate transcription. The cofactor is Zn(2+).

The protein resides in the plastid. It is found in the chloroplast. The enzyme catalyses RNA(n) + a ribonucleoside 5'-triphosphate = RNA(n+1) + diphosphate. Its function is as follows. DNA-dependent RNA polymerase catalyzes the transcription of DNA into RNA using the four ribonucleoside triphosphates as substrates. This is DNA-directed RNA polymerase subunit beta'' from Nasturtium officinale (Watercress).